The chain runs to 452 residues: Phosphoglucosamine mutase (452 aa).

Serine 108 serves as the catalytic Phosphoserine intermediate. Residues serine 108, aspartate 247, aspartate 249, and aspartate 251 each contribute to the Mg(2+) site. Serine 108 bears the Phosphoserine mark.

It belongs to the phosphohexose mutase family. Requires Mg(2+) as cofactor. Post-translationally, activated by phosphorylation.

It carries out the reaction alpha-D-glucosamine 1-phosphate = D-glucosamine 6-phosphate. Catalyzes the conversion of glucosamine-6-phosphate to glucosamine-1-phosphate. The sequence is that of Phosphoglucosamine mutase from Burkholderia thailandensis (strain ATCC 700388 / DSM 13276 / CCUG 48851 / CIP 106301 / E264).